Reading from the N-terminus, the 332-residue chain is 5-dehydro-2-deoxygluconokinase 1 (332 aa).

The protein belongs to the carbohydrate kinase PfkB family.

It carries out the reaction 5-dehydro-2-deoxy-D-gluconate + ATP = 6-phospho-5-dehydro-2-deoxy-D-gluconate + ADP + H(+). It participates in polyol metabolism; myo-inositol degradation into acetyl-CoA; acetyl-CoA from myo-inositol: step 5/7. Its function is as follows. Catalyzes the phosphorylation of 5-dehydro-2-deoxy-D-gluconate (2-deoxy-5-keto-D-gluconate or DKG) to 6-phospho-5-dehydro-2-deoxy-D-gluconate (DKGP). The protein is 5-dehydro-2-deoxygluconokinase 1 of Bacillus cereus (strain ZK / E33L).